A 373-amino-acid chain; its full sequence is Nodulation protein NolL (373 aa).

Transmembrane regions (helical) follow at residues 27 to 47 (DFAKGILITLVIIGHLLQYLI), 62 to 82 (SIYMFHMPLFMAISGYLSSGA), 98 to 118 (QLLLPMLFWCTLIWTLKSAVI), 140 to 160 (WFIWAAFISFILIRVLTTFNR), 164 to 184 (WIISASAIAVAFAPITLSITP), 212 to 232 (RYKWIFVVLLSIAAFICFLGW), 253 to 273 (QVFLMFSGSLAASAVAMQSMF), 286 to 306 (RFVAVQLGQSTLLLYLVQGAV), and 324 to 344 (RITFATVLGVAIVVIAMAIRS).

Belongs to the acyltransferase 3 family.

The protein localises to the cell membrane. Thought to be an acetyltransferase that modifies the fucose of the nod factor. The polypeptide is Nodulation protein NolL (nolL) (Mesorhizobium japonicum (strain LMG 29417 / CECT 9101 / MAFF 303099) (Mesorhizobium loti (strain MAFF 303099))).